Here is a 337-residue protein sequence, read N- to C-terminus: Ral GTPase-activating protein subunit alpha-1 (337 aa).

As to quaternary structure, component of the heterodimeric RalGAP1 complex with RALGAPB. Heterodimerization is required for activity. Interacts with the HLH region of TCF3/isoform E12.

It is found in the cytoplasm. The protein resides in the nucleus. Its function is as follows. Catalytic subunit of the heterodimeric RalGAP1 complex which acts as a GTPase activator for the Ras-like small GTPases RALA and RALB. This Sus scrofa (Pig) protein is Ral GTPase-activating protein subunit alpha-1.